The chain runs to 113 residues: Hydrogenase maturation factor HypA (113 aa).

Residue H2 participates in Ni(2+) binding. 4 residues coordinate Zn(2+): C73, C76, C89, and C92.

It belongs to the HypA/HybF family.

Functionally, involved in the maturation of [NiFe] hydrogenases. Required for nickel insertion into the metal center of the hydrogenase. This Rhodopseudomonas palustris (strain TIE-1) protein is Hydrogenase maturation factor HypA.